Here is a 351-residue protein sequence, read N- to C-terminus: Magnesium-protoporphyrin IX monomethyl ester [oxidative] cyclase 1 (351 aa).

Belongs to the AcsF family. Requires Fe cation as cofactor.

The catalysed reaction is Mg-protoporphyrin IX 13-monomethyl ester + 3 NADPH + 3 O2 + 2 H(+) = 3,8-divinyl protochlorophyllide a + 3 NADP(+) + 5 H2O. It functions in the pathway porphyrin-containing compound metabolism; chlorophyll biosynthesis (light-independent). Its function is as follows. Catalyzes the formation of the isocyclic ring in chlorophyll biosynthesis. Mediates the cyclase reaction, which results in the formation of divinylprotochlorophyllide (Pchlide) characteristic of all chlorophylls from magnesium-protoporphyrin IX 13-monomethyl ester (MgPMME). The sequence is that of Magnesium-protoporphyrin IX monomethyl ester [oxidative] cyclase 1 from Nostoc sp. (strain PCC 7120 / SAG 25.82 / UTEX 2576).